We begin with the raw amino-acid sequence, 210 residues long: Proteasome subunit beta (210 aa).

The propeptide at 1–7 (MEVLKTG) is removed in mature form; by autocatalysis. Catalysis depends on threonine 8, which acts as the Nucleophile.

The protein belongs to the peptidase T1B family. As to quaternary structure, the 20S proteasome core is composed of 14 alpha and 14 beta subunits that assemble into four stacked heptameric rings, resulting in a barrel-shaped structure. The two inner rings, each composed of seven catalytic beta subunits, are sandwiched by two outer rings, each composed of seven alpha subunits. The catalytic chamber with the active sites is on the inside of the barrel. Has a gated structure, the ends of the cylinder being occluded by the N-termini of the alpha-subunits. Is capped at one or both ends by the proteasome regulatory ATPase, PAN.

The protein resides in the cytoplasm. It carries out the reaction Cleavage of peptide bonds with very broad specificity.. Its activity is regulated as follows. The formation of the proteasomal ATPase PAN-20S proteasome complex, via the docking of the C-termini of PAN into the intersubunit pockets in the alpha-rings, triggers opening of the gate for substrate entry. Interconversion between the open-gate and close-gate conformations leads to a dynamic regulation of the 20S proteasome proteolysis activity. Its function is as follows. Component of the proteasome core, a large protease complex with broad specificity involved in protein degradation. The chain is Proteasome subunit beta from Picrophilus torridus (strain ATCC 700027 / DSM 9790 / JCM 10055 / NBRC 100828 / KAW 2/3).